We begin with the raw amino-acid sequence, 296 residues long: N-acetylmuramic acid 6-phosphate etherase 2 (296 aa).

Residues 55–218 form the SIS domain; that stretch reads IVANFKAGGR…STASMVGIGK (164 aa). The active-site Proton donor is Glu-83. Glu-114 is a catalytic residue.

This sequence belongs to the GCKR-like family. MurNAc-6-P etherase subfamily. In terms of assembly, homodimer.

The enzyme catalyses N-acetyl-D-muramate 6-phosphate + H2O = N-acetyl-D-glucosamine 6-phosphate + (R)-lactate. Its pathway is amino-sugar metabolism; N-acetylmuramate degradation. Specifically catalyzes the cleavage of the D-lactyl ether substituent of MurNAc 6-phosphate, producing GlcNAc 6-phosphate and D-lactate. This is N-acetylmuramic acid 6-phosphate etherase 2 from Lactiplantibacillus plantarum (strain ATCC BAA-793 / NCIMB 8826 / WCFS1) (Lactobacillus plantarum).